A 293-amino-acid polypeptide reads, in one-letter code: Protease HtpX homolog (293 aa).

2 helical membrane-spanning segments follow: residues Ile-4–Leu-24 and Pro-39–Ile-59. His-144 serves as a coordination point for Zn(2+). Glu-145 is a catalytic residue. His-148 contributes to the Zn(2+) binding site. 2 consecutive transmembrane segments (helical) span residues Leu-159–Val-179 and Ile-200–Phe-220. Glu-225 contacts Zn(2+).

Belongs to the peptidase M48B family. It depends on Zn(2+) as a cofactor.

It localises to the cell inner membrane. This Herminiimonas arsenicoxydans protein is Protease HtpX homolog.